The primary structure comprises 310 residues: Zinc transporter ZIP9 (310 aa).

Helical transmembrane passes span 7–27 (ISLLSVAMLVGCYVAGTIPLA), 35–55 (LKLITVLGAGLLCGTALAVII), 108–128 (ACIGVSLVLGFVFMLLVDQIG), 148–168 (ITTTLGLVVHAAADGVALGAA), 178–198 (LIVFVAIMLHKAPAAFGLVSF), 212–232 (HLLVFALAAPVLAMLTFLGLS), 246–266 (GVAMLFSAGTFLYVATVHVLP), and 289–309 (VEVVALVLGCLIPLVLSVGHH).

The protein belongs to the ZIP transporter (TC 2.A.5) family. As to expression, expressed in brain, liver, ovary, and testis.

It is found in the golgi apparatus. It localises to the trans-Golgi network membrane. Its subcellular location is the cell membrane. The protein resides in the cytoplasm. The protein localises to the perinuclear region. It is found in the mitochondrion. It localises to the nucleus. The enzyme catalyses Zn(2+)(in) = Zn(2+)(out). Its function is as follows. Has dual functions as a membrane-bound androgen receptor and as an androgen-dependent zinc transporter both of which are mediated through G protein activation and are required for the androgen-dependent apoptotic response. Upon androgen binding, mediates apoptosis by directly activating a stimulatory G protein that leads to increased cAMP levels and MAP kinase activity and which is accompanied by increased intracellular free zinc levels. The protein is Zinc transporter ZIP9 of Micropogonias undulatus (Atlantic croaker).